The sequence spans 421 residues: UDP-N-acetylglucosamine 1-carboxyvinyltransferase (421 aa).

22-23 contacts phosphoenolpyruvate; it reads KN. Arg94 is a UDP-N-acetyl-alpha-D-glucosamine binding site. The active-site Proton donor is the Cys118. 2-(S-cysteinyl)pyruvic acid O-phosphothioketal is present on Cys118. UDP-N-acetyl-alpha-D-glucosamine-binding positions include 123 to 127, Asp308, and Ile330; that span reads RPMDL.

This sequence belongs to the EPSP synthase family. MurA subfamily.

It localises to the cytoplasm. The catalysed reaction is phosphoenolpyruvate + UDP-N-acetyl-alpha-D-glucosamine = UDP-N-acetyl-3-O-(1-carboxyvinyl)-alpha-D-glucosamine + phosphate. It participates in cell wall biogenesis; peptidoglycan biosynthesis. In terms of biological role, cell wall formation. Adds enolpyruvyl to UDP-N-acetylglucosamine. The sequence is that of UDP-N-acetylglucosamine 1-carboxyvinyltransferase from Ruegeria pomeroyi (strain ATCC 700808 / DSM 15171 / DSS-3) (Silicibacter pomeroyi).